A 288-amino-acid chain; its full sequence is 4-hydroxybenzoate octaprenyltransferase (288 aa).

8 helical membrane passes run 23-43, 46-66, 98-118, 141-161, 163-183, 213-233, 234-254, and 268-288; these read IGSL…GRGI, AKIL…GCVV, ILFV…NSMT, LPQV…FAAV, ESLP…TVAY, LIIG…GWLM, NLGG…THQQ, and AFLN…ISYW.

It belongs to the UbiA prenyltransferase family. Requires Mg(2+) as cofactor.

Its subcellular location is the cell inner membrane. The catalysed reaction is all-trans-octaprenyl diphosphate + 4-hydroxybenzoate = 4-hydroxy-3-(all-trans-octaprenyl)benzoate + diphosphate. The protein operates within cofactor biosynthesis; ubiquinone biosynthesis. Catalyzes the prenylation of para-hydroxybenzoate (PHB) with an all-trans polyprenyl group. Mediates the second step in the final reaction sequence of ubiquinone-8 (UQ-8) biosynthesis, which is the condensation of the polyisoprenoid side chain with PHB, generating the first membrane-bound Q intermediate 3-octaprenyl-4-hydroxybenzoate. This chain is 4-hydroxybenzoate octaprenyltransferase, found in Yersinia pestis bv. Antiqua (strain Antiqua).